The following is a 218-amino-acid chain: Adenylate kinase (218 aa).

10–15 is a binding site for ATP; it reads GAGKGT. The interval 30 to 59 is NMP; sequence STGDMLRAAVKAGTPLGLEAKKVMDAGGLV. AMP contacts are provided by residues T31, R36, 57–59, 85–88, and Q92; these read GLV and GFPR. The LID stretch occupies residues 122–159; it reads ERRVHPASGRSYHVRFNPPKAEGVDDVTGEPLVQRDDD. Residues R123 and 132–133 contribute to the ATP site; that span reads SY. Positions 156 and 167 each coordinate AMP. Residue G203 coordinates ATP.

Belongs to the adenylate kinase family. Monomer.

Its subcellular location is the cytoplasm. It carries out the reaction AMP + ATP = 2 ADP. It functions in the pathway purine metabolism; AMP biosynthesis via salvage pathway; AMP from ADP: step 1/1. Catalyzes the reversible transfer of the terminal phosphate group between ATP and AMP. Plays an important role in cellular energy homeostasis and in adenine nucleotide metabolism. The polypeptide is Adenylate kinase (Bordetella pertussis (strain Tohama I / ATCC BAA-589 / NCTC 13251)).